The sequence spans 478 residues: Aspartyl/glutamyl-tRNA(Asn/Gln) amidotransferase subunit B (478 aa).

Belongs to the GatB/GatE family. GatB subfamily. As to quaternary structure, heterotrimer of A, B and C subunits.

The catalysed reaction is L-glutamyl-tRNA(Gln) + L-glutamine + ATP + H2O = L-glutaminyl-tRNA(Gln) + L-glutamate + ADP + phosphate + H(+). It carries out the reaction L-aspartyl-tRNA(Asn) + L-glutamine + ATP + H2O = L-asparaginyl-tRNA(Asn) + L-glutamate + ADP + phosphate + 2 H(+). Allows the formation of correctly charged Asn-tRNA(Asn) or Gln-tRNA(Gln) through the transamidation of misacylated Asp-tRNA(Asn) or Glu-tRNA(Gln) in organisms which lack either or both of asparaginyl-tRNA or glutaminyl-tRNA synthetases. The reaction takes place in the presence of glutamine and ATP through an activated phospho-Asp-tRNA(Asn) or phospho-Glu-tRNA(Gln). In Lachnoclostridium phytofermentans (strain ATCC 700394 / DSM 18823 / ISDg) (Clostridium phytofermentans), this protein is Aspartyl/glutamyl-tRNA(Asn/Gln) amidotransferase subunit B.